The following is a 196-amino-acid chain: DnaA initiator-associating protein DiaA (196 aa).

The region spanning 34-196 (LVQSLLNGNK…DNTLFPHQDD (163 aa)) is the SIS domain.

It belongs to the SIS family. DiaA subfamily. In terms of assembly, homotetramer; dimer of dimers.

Required for the timely initiation of chromosomal replication via direct interactions with the DnaA initiator protein. The chain is DnaA initiator-associating protein DiaA from Shigella flexneri serotype 5b (strain 8401).